A 340-amino-acid chain; its full sequence is Adenosine kinase (340 aa).

D292 is an active-site residue.

The protein belongs to the carbohydrate kinase PfkB family. The cofactor is Mg(2+).

The catalysed reaction is adenosine + ATP = AMP + ADP + H(+). The protein operates within purine metabolism; AMP biosynthesis via salvage pathway; AMP from adenosine: step 1/1. This Schizosaccharomyces pombe (strain 972 / ATCC 24843) (Fission yeast) protein is Adenosine kinase (ado1).